The following is a 145-amino-acid chain: D-aminoacyl-tRNA deacylase (145 aa).

Positions 137–138 (GP) match the Gly-cisPro motif, important for rejection of L-amino acids motif.

The protein belongs to the DTD family. Homodimer.

The protein resides in the cytoplasm. The catalysed reaction is glycyl-tRNA(Ala) + H2O = tRNA(Ala) + glycine + H(+). The enzyme catalyses a D-aminoacyl-tRNA + H2O = a tRNA + a D-alpha-amino acid + H(+). Its function is as follows. An aminoacyl-tRNA editing enzyme that deacylates mischarged D-aminoacyl-tRNAs. Also deacylates mischarged glycyl-tRNA(Ala), protecting cells against glycine mischarging by AlaRS. Acts via tRNA-based rather than protein-based catalysis; rejects L-amino acids rather than detecting D-amino acids in the active site. By recycling D-aminoacyl-tRNA to D-amino acids and free tRNA molecules, this enzyme counteracts the toxicity associated with the formation of D-aminoacyl-tRNA entities in vivo and helps enforce protein L-homochirality. The protein is D-aminoacyl-tRNA deacylase of Pseudomonas paraeruginosa (strain DSM 24068 / PA7) (Pseudomonas aeruginosa (strain PA7)).